We begin with the raw amino-acid sequence, 309 residues long: Lipoyl synthase (309 aa).

[4Fe-4S] cluster-binding residues include C43, C48, C54, C70, C74, C77, and S283. The Radical SAM core domain maps to 56 to 272; that stretch reads AVRKTATFMI…KEIAMQKGFS (217 aa).

Belongs to the radical SAM superfamily. Lipoyl synthase family. Requires [4Fe-4S] cluster as cofactor.

The protein resides in the cytoplasm. It carries out the reaction [[Fe-S] cluster scaffold protein carrying a second [4Fe-4S](2+) cluster] + N(6)-octanoyl-L-lysyl-[protein] + 2 oxidized [2Fe-2S]-[ferredoxin] + 2 S-adenosyl-L-methionine + 4 H(+) = [[Fe-S] cluster scaffold protein] + N(6)-[(R)-dihydrolipoyl]-L-lysyl-[protein] + 4 Fe(3+) + 2 hydrogen sulfide + 2 5'-deoxyadenosine + 2 L-methionine + 2 reduced [2Fe-2S]-[ferredoxin]. It participates in protein modification; protein lipoylation via endogenous pathway; protein N(6)-(lipoyl)lysine from octanoyl-[acyl-carrier-protein]. Its function is as follows. Catalyzes the radical-mediated insertion of two sulfur atoms into the C-6 and C-8 positions of the octanoyl moiety bound to the lipoyl domains of lipoate-dependent enzymes, thereby converting the octanoylated domains into lipoylated derivatives. The polypeptide is Lipoyl synthase (Shouchella clausii (strain KSM-K16) (Alkalihalobacillus clausii)).